The sequence spans 292 residues: Phosphoribosylglycinamide formyltransferase, chloroplastic (292 aa).

Residues 1–65 (MESRVLFSSQ…KAASSTPQIV (65 aa)) constitute a chloroplast transit peptide. 88–90 (GSN) serves as a coordination point for N(1)-(5-phospho-beta-D-ribosyl)glycinamide. (6R)-10-formyltetrahydrofolate-binding positions include 167 to 170 (LKLI) and Asn184. His186 (proton donor) is an active-site residue. Asp227 contacts (6R)-10-formyltetrahydrofolate. Residue Glu256 participates in N(1)-(5-phospho-beta-D-ribosyl)glycinamide binding.

Belongs to the GART family.

Its subcellular location is the plastid. The protein resides in the chloroplast. The catalysed reaction is N(1)-(5-phospho-beta-D-ribosyl)glycinamide + (6R)-10-formyltetrahydrofolate = N(2)-formyl-N(1)-(5-phospho-beta-D-ribosyl)glycinamide + (6S)-5,6,7,8-tetrahydrofolate + H(+). It functions in the pathway purine metabolism; IMP biosynthesis via de novo pathway; N(2)-formyl-N(1)-(5-phospho-D-ribosyl)glycinamide from N(1)-(5-phospho-D-ribosyl)glycinamide (10-formyl THF route): step 1/1. The protein is Phosphoribosylglycinamide formyltransferase, chloroplastic (PUR3) of Arabidopsis thaliana (Mouse-ear cress).